A 456-amino-acid polypeptide reads, in one-letter code: Chromosomal replication initiator protein DnaA 1 (456 aa).

A domain I, interacts with DnaA modulators region spans residues 1-68 (MRAWEEFLLL…KANLINNNGK (68 aa)). The tract at residues 68-101 (KPIRVRVTSLDKSTPFKESQIQQEKTAYFTMQYG) is domain II. The tract at residues 102–320 (DIDPQMSFAN…HALTTLAKRV (219 aa)) is domain III, AAA+ region. The ATP site is built by S150, G152, K153, and T154. The segment at 321–456 (AYKKLSHQLL…AYQSLDLIVD (136 aa)) is domain IV, binds dsDNA.

This sequence belongs to the DnaA family. In terms of assembly, oligomerizes as a right-handed, spiral filament on DNA at oriC.

The protein localises to the cytoplasm. In terms of biological role, plays an essential role in the initiation and regulation of chromosomal replication. ATP-DnaA binds to the origin of replication (oriC) to initiate formation of the DNA replication initiation complex once per cell cycle. Binds the DnaA box (a 9 base pair repeat at the origin) and separates the double-stranded (ds)DNA. Forms a right-handed helical filament on oriC DNA; dsDNA binds to the exterior of the filament while single-stranded (ss)DNA is stabiized in the filament's interior. The ATP-DnaA-oriC complex binds and stabilizes one strand of the AT-rich DNA unwinding element (DUE), permitting loading of DNA polymerase. After initiation quickly degrades to an ADP-DnaA complex that is not apt for DNA replication. Binds acidic phospholipids. This chain is Chromosomal replication initiator protein DnaA 1, found in Chlamydia muridarum (strain MoPn / Nigg).